A 73-amino-acid chain; its full sequence is uncharacterized protein (73 aa).

This is an uncharacterized protein from Sus scrofa (Pig).